The primary structure comprises 564 residues: Eukaryotic translation initiation factor 3 subunit L (564 aa).

Position 2 is an N-acetylserine (serine 2). Serine 21 is modified (phosphoserine). The PCI domain maps to 331 to 537; it reads DAIRVFANIL…IHIADTKVAR (207 aa). N6-acetyllysine is present on residues lysine 465 and lysine 549.

Component of the eukaryotic translation initiation factor 3 (eIF-3) complex, which is composed of 13 subunits: EIF3A, EIF3B, EIF3C, EIF3D, EIF3E, EIF3F, EIF3G, EIF3H, EIF3I, EIF3J, EIF3K, EIF3L and EIF3M. The eIF-3 complex appears to include 3 stable modules: module A is composed of EIF3A, EIF3B, EIF3G and EIF3I; module B is composed of EIF3F, EIF3H, and EIF3M; and module C is composed of EIF3C, EIF3D, EIF3E, EIF3K and EIF3L. EIF3C of module C binds EIF3B of module A and EIF3H of module B, thereby linking the three modules. EIF3J is a labile subunit that binds to the eIF-3 complex via EIF3B. The eIF-3 complex interacts with RPS6KB1 under conditions of nutrient depletion. Mitogenic stimulation leads to binding and activation of a complex composed of MTOR and RPTOR, leading to phosphorylation and release of RPS6KB1 and binding of EIF4B to eIF-3. Interacts with RRN3.

The protein resides in the cytoplasm. Its function is as follows. Component of the eukaryotic translation initiation factor 3 (eIF-3) complex, which is required for several steps in the initiation of protein synthesis. The eIF-3 complex associates with the 40S ribosome and facilitates the recruitment of eIF-1, eIF-1A, eIF-2:GTP:methionyl-tRNAi and eIF-5 to form the 43S pre-initiation complex (43S PIC). The eIF-3 complex stimulates mRNA recruitment to the 43S PIC and scanning of the mRNA for AUG recognition. The eIF-3 complex is also required for disassembly and recycling of post-termination ribosomal complexes and subsequently prevents premature joining of the 40S and 60S ribosomal subunits prior to initiation. The eIF-3 complex specifically targets and initiates translation of a subset of mRNAs involved in cell proliferation, including cell cycling, differentiation and apoptosis, and uses different modes of RNA stem-loop binding to exert either translational activation or repression. (Microbial infection) In case of FCV infection, plays a role in the ribosomal termination-reinitiation event leading to the translation of VP2. This chain is Eukaryotic translation initiation factor 3 subunit L, found in Homo sapiens (Human).